The sequence spans 471 residues: Glutamate--tRNA ligase (471 aa).

The short motif at 9–19 is the 'HIGH' region element; it reads PSPTGYLHVGG. Zn(2+)-binding residues include Cys-98, Cys-100, Cys-125, and His-127. Residues 237 to 241 carry the 'KMSKS' region motif; sequence KLSKR. An ATP-binding site is contributed by Lys-240.

Belongs to the class-I aminoacyl-tRNA synthetase family. Glutamate--tRNA ligase type 1 subfamily. In terms of assembly, monomer. Zn(2+) serves as cofactor.

It localises to the cytoplasm. The catalysed reaction is tRNA(Glu) + L-glutamate + ATP = L-glutamyl-tRNA(Glu) + AMP + diphosphate. In terms of biological role, catalyzes the attachment of glutamate to tRNA(Glu) in a two-step reaction: glutamate is first activated by ATP to form Glu-AMP and then transferred to the acceptor end of tRNA(Glu). In Shigella flexneri, this protein is Glutamate--tRNA ligase.